Reading from the N-terminus, the 163-residue chain is NADH-quinone oxidoreductase subunit I (163 aa).

4Fe-4S ferredoxin-type domains follow at residues 53 to 83 and 94 to 123; these read LRRYPNGEERCIACKLCEAICPAQAITIEAG and VRYDIDMVKCIYCGFCQEACPVEAIVEGPN. Cys63, Cys66, Cys69, Cys73, Cys103, Cys106, Cys109, and Cys113 together coordinate [4Fe-4S] cluster.

The protein belongs to the complex I 23 kDa subunit family. NDH-1 is composed of 14 different subunits. Subunits NuoA, H, J, K, L, M, N constitute the membrane sector of the complex. [4Fe-4S] cluster is required as a cofactor.

The protein resides in the cell inner membrane. The catalysed reaction is a quinone + NADH + 5 H(+)(in) = a quinol + NAD(+) + 4 H(+)(out). NDH-1 shuttles electrons from NADH, via FMN and iron-sulfur (Fe-S) centers, to quinones in the respiratory chain. The immediate electron acceptor for the enzyme in this species is believed to be ubiquinone. Couples the redox reaction to proton translocation (for every two electrons transferred, four hydrogen ions are translocated across the cytoplasmic membrane), and thus conserves the redox energy in a proton gradient. This is NADH-quinone oxidoreductase subunit I from Bartonella tribocorum (strain CIP 105476 / IBS 506).